The following is an 852-amino-acid chain: Bifunctional uridylyltransferase/uridylyl-removing enzyme (852 aa).

The tract at residues 1–318 is uridylyltransferase; that stretch reads MPANLSSALE…STPLRVTLRI (318 aa). The uridylyl-removing stretch occupies residues 319–672; the sequence is DDDYIQVNNQ…SRILPKSDSF (354 aa). Residues 436 to 558 enclose the HD domain; it reads VDDHILTVVR…VQTHERLSAL (123 aa). ACT domains follow at residues 673–757 and 785–852; these read QVMV…SRSR and SVEI…EQLS.

Belongs to the GlnD family. Mg(2+) is required as a cofactor.

It carries out the reaction [protein-PII]-L-tyrosine + UTP = [protein-PII]-uridylyl-L-tyrosine + diphosphate. It catalyses the reaction [protein-PII]-uridylyl-L-tyrosine + H2O = [protein-PII]-L-tyrosine + UMP + H(+). Its activity is regulated as follows. Uridylyltransferase (UTase) activity is inhibited by glutamine, while glutamine activates uridylyl-removing (UR) activity. Modifies, by uridylylation and deuridylylation, the PII regulatory proteins (GlnB and homologs), in response to the nitrogen status of the cell that GlnD senses through the glutamine level. Under low glutamine levels, catalyzes the conversion of the PII proteins and UTP to PII-UMP and PPi, while under higher glutamine levels, GlnD hydrolyzes PII-UMP to PII and UMP (deuridylylation). Thus, controls uridylylation state and activity of the PII proteins, and plays an important role in the regulation of nitrogen assimilation and metabolism. This chain is Bifunctional uridylyltransferase/uridylyl-removing enzyme, found in Neisseria meningitidis serogroup B (strain ATCC BAA-335 / MC58).